The sequence spans 244 residues: tRNA (guanine-N(7)-)-methyltransferase (244 aa).

Positions 1–24 (MTDSHVPHPESPAVEEGEERPHRR) are disordered. Residues glutamate 74, glutamate 99, aspartate 126, and aspartate 149 each coordinate S-adenosyl-L-methionine. Aspartate 149 is an active-site residue. Residues lysine 153, aspartate 185, and 222–225 (TKFE) each bind substrate.

This sequence belongs to the class I-like SAM-binding methyltransferase superfamily. TrmB family.

It catalyses the reaction guanosine(46) in tRNA + S-adenosyl-L-methionine = N(7)-methylguanosine(46) in tRNA + S-adenosyl-L-homocysteine. Its pathway is tRNA modification; N(7)-methylguanine-tRNA biosynthesis. Functionally, catalyzes the formation of N(7)-methylguanine at position 46 (m7G46) in tRNA. The polypeptide is tRNA (guanine-N(7)-)-methyltransferase (Pseudomonas syringae pv. syringae (strain B728a)).